Reading from the N-terminus, the 223-residue chain is Icarapin (223 aa).

A signal peptide spans 1–19; it reads MKTLGVLFIAAWFIACTHS. Residues Asn-126, Asn-142, Asn-168, and Asn-193 are each glycosylated (N-linked (GlcNAc...) asparagine). Polar residues predominate over residues 186–203; it reads LPTLIGKNETSTQSSRSV. The tract at residues 186-223 is disordered; that stretch reads LPTLIGKNETSTQSSRSVESVEDFDNEIPKNQGDVLTA.

In terms of tissue distribution, expressed by the venom duct.

The protein resides in the secreted. This is Icarapin from Apis mellifera carnica (Carniolan honeybee).